We begin with the raw amino-acid sequence, 785 residues long: Endonuclease MutS2 (785 aa).

ATP is bound at residue 332-339 (GPNTGGKT). The Smr domain maps to 710–785 (VDLRGMDSEE…GNGVTVVELK (76 aa)).

This sequence belongs to the DNA mismatch repair MutS family. MutS2 subfamily. As to quaternary structure, homodimer. Binds to stalled ribosomes, contacting rRNA.

Functionally, endonuclease that is involved in the suppression of homologous recombination and thus may have a key role in the control of bacterial genetic diversity. Its function is as follows. Acts as a ribosome collision sensor, splitting the ribosome into its 2 subunits. Detects stalled/collided 70S ribosomes which it binds and splits by an ATP-hydrolysis driven conformational change. Acts upstream of the ribosome quality control system (RQC), a ribosome-associated complex that mediates the extraction of incompletely synthesized nascent chains from stalled ribosomes and their subsequent degradation. Probably generates substrates for RQC. The polypeptide is Endonuclease MutS2 (Clostridium novyi (strain NT)).